Reading from the N-terminus, the 231-residue chain is tRNA (guanine-N(1)-)-methyltransferase (231 aa).

S-adenosyl-L-methionine contacts are provided by residues glycine 111 and 131-136; that span reads LGNYVL.

It belongs to the RNA methyltransferase TrmD family. In terms of assembly, homodimer.

The protein resides in the cytoplasm. The enzyme catalyses guanosine(37) in tRNA + S-adenosyl-L-methionine = N(1)-methylguanosine(37) in tRNA + S-adenosyl-L-homocysteine + H(+). In terms of biological role, specifically methylates guanosine-37 in various tRNAs. This chain is tRNA (guanine-N(1)-)-methyltransferase, found in Leptospira interrogans serogroup Icterohaemorrhagiae serovar copenhageni (strain Fiocruz L1-130).